The sequence spans 489 residues: FAD-linked oxidoreductase tazG (489 aa).

Positions 1–17 (MVAFSAILQTALGLSAA) are cleaved as a signal peptide. N-linked (GlcNAc...) asparagine glycosylation is present at asparagine 38. The 170-residue stretch at 55–224 (APSYGAGAIK…TSATYRLPEV (170 aa)) folds into the FAD-binding PCMH-type domain. Residues asparagine 242 and asparagine 306 are each glycosylated (N-linked (GlcNAc...) asparagine).

This sequence belongs to the oxygen-dependent FAD-linked oxidoreductase family. FAD is required as a cofactor.

It participates in secondary metabolite biosynthesis. Its function is as follows. FAD-linked oxidoreductase; part of the gene cluster that mediates the biosynthesis of azaterrilone A and other azaphilones, a class of fungal metabolites characterized by a highly oxygenated pyrano-quinone bicyclic core and exhibiting a broad range of bioactivities. The first step of the pathway begins with the non-reducing polyketide synthase tazA that assembles one acetyl-CoA starter unit, five malonyl-CoA units, and catalyzes a series of Claisen condensations, methylation, PT-mediated cyclization, and finally releases the first hexaketide precursor through the R-domain. The tazA product then undergoes reduction on its terminal ketone and the following pyran-ring formation by yet undetermined enzyme(s). Dehydration and enoyl reduction, possibly involving the trans-enoyl reductase tazE leads to the next intermediate. TazD is predicted as an acetyltransferase and might catalyze the acetylation steps leading to the synthesis of azaterrilone A. Azaterrilone A is not the final product of the taz pathway and both the highly reducing polyketide synthase tazB and the dual enzyme tazHJ catalyze late steps of the pathway, leading to the production of the 2 final stereoisomers that contain additional polyketide modification whose structures have still to be determined. The polypeptide is FAD-linked oxidoreductase tazG (Aspergillus terreus (strain NIH 2624 / FGSC A1156)).